Reading from the N-terminus, the 278-residue chain is Putative transposase for insertion sequence element IS986/IS6110 (278 aa).

Residues 101-268 (GPPAPNRLWV…VPPVELEAAY (168 aa)) form the Integrase catalytic domain.

Involved in the transposition of the insertion sequence. In Mycobacterium tuberculosis (strain CDC 1551 / Oshkosh), this protein is Putative transposase for insertion sequence element IS986/IS6110.